The sequence spans 237 residues: Ribonuclease PH (237 aa).

Residues R86 and 124-126 contribute to the phosphate site; that span reads GTR.

The protein belongs to the RNase PH family. As to quaternary structure, homohexameric ring arranged as a trimer of dimers.

It carries out the reaction tRNA(n+1) + phosphate = tRNA(n) + a ribonucleoside 5'-diphosphate. Functionally, phosphorolytic 3'-5' exoribonuclease that plays an important role in tRNA 3'-end maturation. Removes nucleotide residues following the 3'-CCA terminus of tRNAs; can also add nucleotides to the ends of RNA molecules by using nucleoside diphosphates as substrates, but this may not be physiologically important. Probably plays a role in initiation of 16S rRNA degradation (leading to ribosome degradation) during starvation. The polypeptide is Ribonuclease PH (Methylobacterium radiotolerans (strain ATCC 27329 / DSM 1819 / JCM 2831 / NBRC 15690 / NCIMB 10815 / 0-1)).